The following is a 570-amino-acid chain: Sulfite reductase [NADPH] hemoprotein beta-component (570 aa).

[4Fe-4S] cluster is bound by residues Cys-434, Cys-440, Cys-479, and Cys-483. Cys-483 contacts siroheme.

Belongs to the nitrite and sulfite reductase 4Fe-4S domain family. As to quaternary structure, alpha(8)-beta(8). The alpha component is a flavoprotein, the beta component is a hemoprotein. Siroheme serves as cofactor. It depends on [4Fe-4S] cluster as a cofactor.

It catalyses the reaction hydrogen sulfide + 3 NADP(+) + 3 H2O = sulfite + 3 NADPH + 4 H(+). The protein operates within sulfur metabolism; hydrogen sulfide biosynthesis; hydrogen sulfide from sulfite (NADPH route): step 1/1. In terms of biological role, component of the sulfite reductase complex that catalyzes the 6-electron reduction of sulfite to sulfide. This is one of several activities required for the biosynthesis of L-cysteine from sulfate. The polypeptide is Sulfite reductase [NADPH] hemoprotein beta-component (Zymomonas mobilis subsp. mobilis (strain ATCC 31821 / ZM4 / CP4)).